Consider the following 179-residue polypeptide: Large ribosomal subunit protein uL5 (179 aa).

It belongs to the universal ribosomal protein uL5 family. In terms of assembly, part of the 50S ribosomal subunit; part of the 5S rRNA/L5/L18/L25 subcomplex. Contacts the 5S rRNA and the P site tRNA. Forms a bridge to the 30S subunit in the 70S ribosome.

Its function is as follows. This is one of the proteins that bind and probably mediate the attachment of the 5S RNA into the large ribosomal subunit, where it forms part of the central protuberance. In the 70S ribosome it contacts protein S13 of the 30S subunit (bridge B1b), connecting the 2 subunits; this bridge is implicated in subunit movement. Contacts the P site tRNA; the 5S rRNA and some of its associated proteins might help stabilize positioning of ribosome-bound tRNAs. This Bordetella bronchiseptica (strain ATCC BAA-588 / NCTC 13252 / RB50) (Alcaligenes bronchisepticus) protein is Large ribosomal subunit protein uL5.